A 338-amino-acid polypeptide reads, in one-letter code: RNA 3'-terminal phosphate cyclase (338 aa).

ATP-binding positions include glutamine 103 and tyrosine 283–glutamine 287. Catalysis depends on histidine 308, which acts as the Tele-AMP-histidine intermediate.

This sequence belongs to the RNA 3'-terminal cyclase family. Type 1 subfamily.

The protein localises to the cytoplasm. It catalyses the reaction a 3'-end 3'-phospho-ribonucleotide-RNA + ATP = a 3'-end 2',3'-cyclophospho-ribonucleotide-RNA + AMP + diphosphate. Its function is as follows. Catalyzes the conversion of 3'-phosphate to a 2',3'-cyclic phosphodiester at the end of RNA. The mechanism of action of the enzyme occurs in 3 steps: (A) adenylation of the enzyme by ATP; (B) transfer of adenylate to an RNA-N3'P to produce RNA-N3'PP5'A; (C) and attack of the adjacent 2'-hydroxyl on the 3'-phosphorus in the diester linkage to produce the cyclic end product. The biological role of this enzyme is unknown but it is likely to function in some aspects of cellular RNA processing. The protein is RNA 3'-terminal phosphate cyclase of Escherichia coli O45:K1 (strain S88 / ExPEC).